The following is a 544-amino-acid chain: Probable protein kinase UbiB (544 aa).

Positions 123–500 (DFDEKALASA…RNKQRKSQYL (378 aa)) constitute a Protein kinase domain. ATP contacts are provided by residues 129–137 (LASASIAQV) and K152. The active-site Proton acceptor is the D286. Helical transmembrane passes span 499–519 (YLLG…ISAS) and 522–542 (MAIA…YKSG).

The protein belongs to the ABC1 family. UbiB subfamily.

It localises to the cell inner membrane. It functions in the pathway cofactor biosynthesis; ubiquinone biosynthesis [regulation]. Its function is as follows. Is probably a protein kinase regulator of UbiI activity which is involved in aerobic coenzyme Q (ubiquinone) biosynthesis. Required for the expression of 2'-N-acetyltransferase. The chain is Probable protein kinase UbiB from Providencia stuartii.